The primary structure comprises 590 residues: Aspartate--tRNA(Asp/Asn) ligase (590 aa).

Position 170 (Glu-170) interacts with L-aspartate. Residues 194–197 (QLFK) are aspartate. Arg-216 contacts L-aspartate. ATP-binding positions include 216–218 (RDE) and Gln-225. Residue His-448 participates in L-aspartate binding. Glu-482 is a binding site for ATP. Residue Arg-489 coordinates L-aspartate. Residue 534–537 (GWDR) participates in ATP binding. Positions 557–590 (SGGGADPLTGAPAPITPQQRRESGIDAKPKKDGE) are disordered. Over residues 575-590 (QRRESGIDAKPKKDGE) the composition is skewed to basic and acidic residues.

The protein belongs to the class-II aminoacyl-tRNA synthetase family. Type 1 subfamily. As to quaternary structure, homodimer.

It localises to the cytoplasm. It carries out the reaction tRNA(Asx) + L-aspartate + ATP = L-aspartyl-tRNA(Asx) + AMP + diphosphate. Its function is as follows. Aspartyl-tRNA synthetase with relaxed tRNA specificity since it is able to aspartylate not only its cognate tRNA(Asp) but also tRNA(Asn). Reaction proceeds in two steps: L-aspartate is first activated by ATP to form Asp-AMP and then transferred to the acceptor end of tRNA(Asp/Asn). In Mycobacterium sp. (strain JLS), this protein is Aspartate--tRNA(Asp/Asn) ligase.